The chain runs to 116 residues: Protein Rev (116 aa).

Ser-5 carries the phosphoserine; by host CK2 modification. A homomultimerization region spans residues 18–26; the sequence is IIRLLYQSN. The disordered stretch occupies residues 27-49; sequence PYPEPAGTRQAQRNRRRRWRARQ. The Nuclear localization signal and RNA-binding (RRE) motif lies at 34–50; it reads TRQAQRNRRRRWRARQR. Residues 38–49 are compositionally biased toward basic residues; sequence QRNRRRRWRARQ. The Nuclear export signal and binding to XPO1 signature appears at 73–84; that stretch reads LQLPPLERLTLD. The segment at 86–116 is disordered; that stretch reads SEDCGTSGEKGVGSPQTSGESPAVLGTGAKE. A phosphoserine; by host mark is found at Ser-92 and Ser-99.

Belongs to the HIV-1 REV protein family. In terms of assembly, homomultimer; when bound to the RRE. Multimeric assembly is essential for activity and may involve XPO1. Binds to human KPNB1, XPO1, TNPO1, RANBP5 and IPO7. Interacts with the viral Integrase. Interacts with human KHDRBS1. Interacts with human NAP1; this interaction decreases Rev multimerization and stimulates its activity. Interacts with human DEAD-box helicases DDX3 and DDX24; these interactions may serve for viral RNA export to the cytoplasm and packaging, respectively. Interacts with human PSIP1; this interaction may inhibit HIV-1 DNA integration by promoting dissociation of the Integrase-LEDGF/p75 complex. Asymmetrically arginine dimethylated at one site by host PRMT6. Methylation impairs the RNA-binding activity and export of viral RNA from the nucleus to the cytoplasm. Post-translationally, phosphorylated by protein kinase CK2. Presence of, and maybe binding to the N-terminus of the regulatory beta subunit of CK2 is necessary for CK2-mediated Rev's phosphorylation.

The protein resides in the host nucleus. It is found in the host nucleolus. The protein localises to the host cytoplasm. Escorts unspliced or incompletely spliced viral pre-mRNAs (late transcripts) out of the nucleus of infected cells. These pre-mRNAs carry a recognition sequence called Rev responsive element (RRE) located in the env gene, that is not present in fully spliced viral mRNAs (early transcripts). This function is essential since most viral proteins are translated from unspliced or partially spliced pre-mRNAs which cannot exit the nucleus by the pathway used by fully processed cellular mRNAs. Rev itself is translated from a fully spliced mRNA that readily exits the nucleus. Rev's nuclear localization signal (NLS) binds directly to KPNB1/Importin beta-1 without previous binding to KPNA1/Importin alpha-1. KPNB1 binds to the GDP bound form of RAN (Ran-GDP) and targets Rev to the nucleus. In the nucleus, the conversion from Ran-GDP to Ran-GTP dissociates Rev from KPNB1 and allows Rev's binding to the RRE in viral pre-mRNAs. Rev multimerization on the RRE via cooperative assembly exposes its nuclear export signal (NES) to the surface. Rev can then form a complex with XPO1/CRM1 and Ran-GTP, leading to nuclear export of the complex. Conversion from Ran-GTP to Ran-GDP mediates dissociation of the Rev/RRE/XPO1/RAN complex, so that Rev can return to the nucleus for a subsequent round of export. Beside KPNB1, also seems to interact with TNPO1/Transportin-1, RANBP5/IPO5 and IPO7/RANBP7 for nuclear import. The nucleoporin-like HRB/RIP is an essential cofactor that probably indirectly interacts with Rev to release HIV RNAs from the perinuclear region to the cytoplasm. The protein is Protein Rev of Human immunodeficiency virus type 1 group M subtype H (isolate VI991) (HIV-1).